We begin with the raw amino-acid sequence, 476 residues long: MNFETVIGLEVHVELKTNSKIFSSAPAHFGAEPNTNTTVVDLGMPGVLPVLNKRAVEYGMKAAMAINCEIAEHTKFDRKNYFYPDNPKAYQISQFDKPIGEHGWIEIEVGGKKKKIGITRLHLEEDAGKNTHTSHGYSLVDINRQGTPLIEIVSEPDIRSAEEAYAYLEKLKSIIQYTGVSDVKMEEGSMRCDANISIRPIGQEEFGVKTELKNLNSFNNVRKGIEYEEKRQAEVLKSGGIIEQETRRFEEATGKTSLMRIKEGSDDYRYFPEPDLVDLFIDDAWKERIRAEIPELPDKRQIRYINDLGLPAYDAMVLTLTKEMSDFFEATLAAGADAKQASNWLMGEVSAYLNAEQKELHDTGLTPENLAGMIKLIEAGTISSKIAKKVFRELAQNGGDAEQVVKDKGLVQISDEGALRTIIGEILDNNEQSIIDYKNGKDRAVGFLVGQVMKATKGQANPPMVNKILLEEMNKR.

This sequence belongs to the GatB/GatE family. GatB subfamily. Heterotrimer of A, B and C subunits.

It carries out the reaction L-glutamyl-tRNA(Gln) + L-glutamine + ATP + H2O = L-glutaminyl-tRNA(Gln) + L-glutamate + ADP + phosphate + H(+). It catalyses the reaction L-aspartyl-tRNA(Asn) + L-glutamine + ATP + H2O = L-asparaginyl-tRNA(Asn) + L-glutamate + ADP + phosphate + 2 H(+). Functionally, allows the formation of correctly charged Asn-tRNA(Asn) or Gln-tRNA(Gln) through the transamidation of misacylated Asp-tRNA(Asn) or Glu-tRNA(Gln) in organisms which lack either or both of asparaginyl-tRNA or glutaminyl-tRNA synthetases. The reaction takes place in the presence of glutamine and ATP through an activated phospho-Asp-tRNA(Asn) or phospho-Glu-tRNA(Gln). The polypeptide is Aspartyl/glutamyl-tRNA(Asn/Gln) amidotransferase subunit B (Listeria innocua serovar 6a (strain ATCC BAA-680 / CLIP 11262)).